The sequence spans 124 residues: MARVKRGVTTRARHKKVIKLAKGYRGRSKNCYRIALQRVEKALQYAYRDRRNRKRFFRSLWIMRINAAARQHGLLYSDFIHGLSLANITLNRKVLADMAVNNQDNFKQIVDITKEALTKSRVAQ.

It belongs to the bacterial ribosomal protein bL20 family.

In terms of biological role, binds directly to 23S ribosomal RNA and is necessary for the in vitro assembly process of the 50S ribosomal subunit. It is not involved in the protein synthesizing functions of that subunit. The polypeptide is Large ribosomal subunit protein bL20 (Ehrlichia canis (strain Jake)).